Reading from the N-terminus, the 307-residue chain is tRNA dimethylallyltransferase (307 aa).

Residue 9–16 (GATGTGKS) participates in ATP binding. 11-16 (TGTGKS) is a substrate binding site.

The protein belongs to the IPP transferase family. As to quaternary structure, monomer. Mg(2+) is required as a cofactor.

It carries out the reaction adenosine(37) in tRNA + dimethylallyl diphosphate = N(6)-dimethylallyladenosine(37) in tRNA + diphosphate. Catalyzes the transfer of a dimethylallyl group onto the adenine at position 37 in tRNAs that read codons beginning with uridine, leading to the formation of N6-(dimethylallyl)adenosine (i(6)A). This chain is tRNA dimethylallyltransferase, found in Clavibacter sepedonicus (Clavibacter michiganensis subsp. sepedonicus).